We begin with the raw amino-acid sequence, 373 residues long: Glutamate 5-kinase (373 aa).

K15 contacts ATP. Substrate is bound by residues S54, D141, and N153. ATP is bound by residues 173–174 and 215–221; these read SD and TGGMATK. Residues 280 to 358 form the PUA domain; it reads RGKLLVDEGA…SEIEVVLGYK (79 aa).

This sequence belongs to the glutamate 5-kinase family.

Its subcellular location is the cytoplasm. The catalysed reaction is L-glutamate + ATP = L-glutamyl 5-phosphate + ADP. It participates in amino-acid biosynthesis; L-proline biosynthesis; L-glutamate 5-semialdehyde from L-glutamate: step 1/2. Its function is as follows. Catalyzes the transfer of a phosphate group to glutamate to form L-glutamate 5-phosphate. In Syntrophotalea carbinolica (strain DSM 2380 / NBRC 103641 / GraBd1) (Pelobacter carbinolicus), this protein is Glutamate 5-kinase.